Here is a 561-residue protein sequence, read N- to C-terminus: Nephronectin (561 aa).

Residues 1–19 (MAVLLAAVLASSLYLQVAA) form the signal peptide. One can recognise an EGF-like 1 domain in the interval 52 to 87 (SWGQCQPVCQPQCKHGECVGPNKCKCHPGFAGKTCN). 6 disulfides stabilise this stretch: C56–C69, C60–C75, C77–C86, C93–C104, C100–C113, and C115–C127. The region spanning 89–128 (DLNECGLKPRPCKHRCMNTFGSYKCYCLNGYMLLPDGSCS) is the EGF-like 2; calcium-binding domain. The 37-residue stretch at 132-168 (SCSMANCQYGCDVVKGQVRCQCPSPGLQLAPDGRTCV) folds into the EGF-like 3 domain. One can recognise an EGF-like 4; calcium-binding domain in the interval 169 to 213 (DIDECATGRVSCPRFRQCVNTFGSYICKCHTGFDLMYIGGKYQCH). 6 disulfides stabilise this stretch: C173–C186, C180–C195, C197–C212, C218–C231, C225–C240, and C242–C253. Residues 214-254 (DIDECSLGQHQCSSYARCYNIHGSYKCQCRDGYEGDGLNCV) form the EGF-like 5; calcium-binding domain. The segment at 266–370 (PIHMPERNGT…TSTTTRVITV (105 aa)) is disordered. Positions 307–316 (TNRPTSKPTT) are enriched in low complexity. Pro residues predominate over residues 317-348 (RPTPNPTPQPTPPPPPPLPTEPRTTPLPPTPE). The segment covering 352 to 366 (TRPTTIAPATSTTTR) has biased composition (low complexity). The Integrin interaction motif lies at 382-384 (RGD). An MAM domain is found at 420–561 (HSCNFDHGLC…DDVSLKRGRC (142 aa)).

The protein belongs to the nephronectin family. Homodimer and homotrimer. As to expression, expressed in kidney (at protein level).

Its subcellular location is the secreted. It localises to the extracellular space. It is found in the extracellular matrix. Its function is as follows. Functional ligand of integrin alpha-8/beta-1 in kidney development. Regulates the expression of GDNF with integrin alpha-8/beta-1 which is essential for kidney development. May also play a role in the development and function of various tissues, regulating cell adhesion, spreading and survival through the binding of several integrins. In Mus musculus (Mouse), this protein is Nephronectin (Npnt).